The chain runs to 344 residues: tRNA N6-adenosine threonylcarbamoyltransferase (344 aa).

Residues H114 and H118 each contribute to the Fe cation site. Substrate contacts are provided by residues 136 to 140, D170, G183, D187, and N278; that span reads LVSGG. A Fe cation-binding site is contributed by D306. The interval 325–344 is disordered; it reads PSPLDVPSDPGLPVMQGQVR.

It belongs to the KAE1 / TsaD family. Fe(2+) is required as a cofactor.

It is found in the cytoplasm. It carries out the reaction L-threonylcarbamoyladenylate + adenosine(37) in tRNA = N(6)-L-threonylcarbamoyladenosine(37) in tRNA + AMP + H(+). In terms of biological role, required for the formation of a threonylcarbamoyl group on adenosine at position 37 (t(6)A37) in tRNAs that read codons beginning with adenine. Is involved in the transfer of the threonylcarbamoyl moiety of threonylcarbamoyl-AMP (TC-AMP) to the N6 group of A37, together with TsaE and TsaB. TsaD likely plays a direct catalytic role in this reaction. The protein is tRNA N6-adenosine threonylcarbamoyltransferase of Mycobacterium tuberculosis (strain ATCC 25177 / H37Ra).